Here is a 256-residue protein sequence, read N- to C-terminus: Trans-aconitate 2-methyltransferase (256 aa).

This sequence belongs to the methyltransferase superfamily. Tam family.

Its subcellular location is the cytoplasm. The enzyme catalyses trans-aconitate + S-adenosyl-L-methionine = (E)-3-(methoxycarbonyl)pent-2-enedioate + S-adenosyl-L-homocysteine. Functionally, catalyzes the S-adenosylmethionine monomethyl esterification of trans-aconitate. In Agrobacterium fabrum (strain C58 / ATCC 33970) (Agrobacterium tumefaciens (strain C58)), this protein is Trans-aconitate 2-methyltransferase.